Consider the following 84-residue polypeptide: Large ribosomal subunit protein bL27 (84 aa).

Positions 1 to 21 (MATKKAGGSSRNGRDSAGRRL) are disordered.

It belongs to the bacterial ribosomal protein bL27 family.

The sequence is that of Large ribosomal subunit protein bL27 from Pelagibacter ubique (strain HTCC1062).